We begin with the raw amino-acid sequence, 515 residues long: Protein translocase subunit SecD (515 aa).

A helical transmembrane segment spans residues 6 to 26 (LYSLIFIIILTAFAVWVDLPG). Residues 141–186 (AITNGNQNQNSTKNGTPTPGTTPTPESTPQANQTPVAANVTPTPED) form a disordered region. Positions 150 to 169 (NSTKNGTPTPGTTPTPESTP) are enriched in low complexity. Residues 170 to 186 (QANQTPVAANVTPTPED) show a composition bias toward polar residues. Transmembrane regions (helical) follow at residues 322-342 (RSIRAGLIGIGAVALFMILYY), 344-364 (LPGFVSVVALAIYAAVVFALF), 367-387 (IPVTLTLAGIAGFILSVGMAV), 427-447 (ISTLITCAILIWFGSRFGASV), and 450-470 (GFAITLAIGVIVSMFTAIFVT).

It belongs to the SecD/SecF family. SecD subfamily. As to quaternary structure, forms a complex with SecF. Part of the essential Sec protein translocation apparatus which comprises SecA, SecYEG and auxiliary proteins SecDF. Other proteins may also be involved.

Its subcellular location is the cell membrane. In terms of biological role, part of the Sec protein translocase complex. Interacts with the SecYEG preprotein conducting channel. SecDF uses the proton motive force (PMF) to complete protein translocation after the ATP-dependent function of SecA. The protein is Protein translocase subunit SecD of Thermobaculum terrenum (strain ATCC BAA-798 / CCMEE 7001 / YNP1).